Here is a 480-residue protein sequence, read N- to C-terminus: Glutamate--tRNA ligase 2 (480 aa).

The 'HIGH' region signature appears at 15-25; the sequence is PSPTGYLHVGG. The 'KMSKS' region signature appears at 248-252; that stretch reads RLSKR. Position 251 (lysine 251) interacts with ATP.

This sequence belongs to the class-I aminoacyl-tRNA synthetase family. Glutamate--tRNA ligase type 1 subfamily. Monomer.

It localises to the cytoplasm. The catalysed reaction is tRNA(Glu) + L-glutamate + ATP = L-glutamyl-tRNA(Glu) + AMP + diphosphate. Catalyzes the attachment of glutamate to tRNA(Glu) in a two-step reaction: glutamate is first activated by ATP to form Glu-AMP and then transferred to the acceptor end of tRNA(Glu). In Koribacter versatilis (strain Ellin345), this protein is Glutamate--tRNA ligase 2.